The primary structure comprises 894 residues: UPF0182 protein GSU2333 (894 aa).

The next 7 membrane-spanning stretches (helical) occupy residues 6–26, 50–70, 98–118, 162–182, 203–223, 250–270, and 275–295; these read FLLI…LITF, VGAG…NLYF, MVQM…LLAG, KGFV…VYFF, LAIL…LDAV, ILTL…WKGA, and LIPP…YPAM.

It belongs to the UPF0182 family.

The protein resides in the cell membrane. The sequence is that of UPF0182 protein GSU2333 from Geobacter sulfurreducens (strain ATCC 51573 / DSM 12127 / PCA).